The chain runs to 518 residues: Glutamate--cysteine ligase (518 aa).

This sequence belongs to the glutamate--cysteine ligase type 1 family. Type 1 subfamily.

The enzyme catalyses L-cysteine + L-glutamate + ATP = gamma-L-glutamyl-L-cysteine + ADP + phosphate + H(+). Its pathway is sulfur metabolism; glutathione biosynthesis; glutathione from L-cysteine and L-glutamate: step 1/2. The chain is Glutamate--cysteine ligase from Shigella sonnei (strain Ss046).